The primary structure comprises 160 residues: Cytochrome b6-f complex subunit 4 (160 aa).

The next 3 helical transmembrane spans lie at 36 to 56, 95 to 115, and 131 to 151; these read LLYI…GLAV, LLGV…PFLE, and TVFL…TLPI.

It belongs to the cytochrome b family. PetD subfamily. As to quaternary structure, the 4 large subunits of the cytochrome b6-f complex are cytochrome b6, subunit IV (17 kDa polypeptide, petD), cytochrome f and the Rieske protein, while the 4 small subunits are petG, petL, petM and petN. The complex functions as a dimer.

It localises to the plastid. It is found in the chloroplast thylakoid membrane. Its function is as follows. Component of the cytochrome b6-f complex, which mediates electron transfer between photosystem II (PSII) and photosystem I (PSI), cyclic electron flow around PSI, and state transitions. The sequence is that of Cytochrome b6-f complex subunit 4 from Sorghum bicolor (Sorghum).